A 473-amino-acid polypeptide reads, in one-letter code: Serine palmitoyltransferase 1 (473 aa).

Over 1–15 (MATATEQWVLVEMVQ) the chain is Lumenal. Residues 1–66 (MATATEQWVL…KEELIEEWQP (66 aa)) form an interaction with SPTLC2 region. A helical transmembrane segment spans residues 16–36 (ALYEAPAYHLILEGILILWII). At 37-473 (RLLFSKTYKL…IKEVAQAVLL (437 aa)) the chain is on the cytoplasmic side. Tyr-164 bears the Phosphotyrosine; by ABL mark.

Belongs to the class-II pyridoxal-phosphate-dependent aminotransferase family. As to quaternary structure, component of the serine palmitoyltransferase (SPT) complex, which is also composed of SPTLC2 or SPTLC3 and SPTSSA or SPTSSB. The heterodimer consisting of SPTLC1 and SPTLC2/SPTLC3 forms the catalytic core of the enzyme, while SPTSSA or SPTSSB subunits determine substrate specificity. SPT also interacts with ORMDL proteins, especially ORMDL3, which negatively regulate SPT activity in the presence of ceramides. Forms dimers of heterodimers with SPTLC2. Interacts with RTN4 (isoform B). Requires pyridoxal 5'-phosphate as cofactor. Post-translationally, phosphorylation at Tyr-164 inhibits activity and promotes cell survival. In terms of tissue distribution, widely expressed. Not detected in small intestine.

It is found in the endoplasmic reticulum membrane. The enzyme catalyses L-serine + hexadecanoyl-CoA + H(+) = 3-oxosphinganine + CO2 + CoA. It carries out the reaction octadecanoyl-CoA + L-serine + H(+) = 3-oxoeicosasphinganine + CO2 + CoA. It catalyses the reaction tetradecanoyl-CoA + L-serine + H(+) = 3-oxohexadecasphinganine + CO2 + CoA. The catalysed reaction is dodecanoyl-CoA + L-serine + H(+) = 3-oxotetradecasphinganine + CO2 + CoA. It participates in lipid metabolism; sphingolipid metabolism. SPT complex catalytic activity is negatively regulated by ORMDL proteins, including ORMDL3, in the presence of ceramides. This mechanism allows to maintain ceramide levels at sufficient concentrations for the production of complex sphingolipids, but which prevents the accumulation of ceramides to levels that trigger apoptosis. In terms of biological role, component of the serine palmitoyltransferase multisubunit enzyme (SPT) that catalyzes the initial and rate-limiting step in sphingolipid biosynthesis by condensing L-serine and activated acyl-CoA (most commonly palmitoyl-CoA) to form long-chain bases. The SPT complex is also composed of SPTLC2 or SPTLC3 and SPTSSA or SPTSSB. Within this complex, the heterodimer with SPTLC2 or SPTLC3 forms the catalytic core. The composition of the serine palmitoyltransferase (SPT) complex determines the substrate preference. The SPTLC1-SPTLC2-SPTSSA complex shows a strong preference for C16-CoA substrate, while the SPTLC1-SPTLC3-SPTSSA isozyme uses both C14-CoA and C16-CoA as substrates, with a slight preference for C14-CoA. The SPTLC1-SPTLC2-SPTSSB complex shows a strong preference for C18-CoA substrate, while the SPTLC1-SPTLC3-SPTSSB isozyme displays an ability to use a broader range of acyl-CoAs, without apparent preference. Required for adipocyte cell viability and metabolic homeostasis. This chain is Serine palmitoyltransferase 1 (SPTLC1), found in Homo sapiens (Human).